The primary structure comprises 133 residues: ATP synthase epsilon chain, sodium ion specific (133 aa).

It belongs to the ATPase epsilon chain family. As to quaternary structure, F-type ATPases have 2 components, CF(1) - the catalytic core - and CF(0) - the membrane proton channel. CF(1) has five subunits: alpha(3), beta(3), gamma(1), delta(1), epsilon(1). CF(0) has three main subunits: a, b and c.

It is found in the cell membrane. With respect to regulation, inhibited by nitrate. Produces ATP from ADP in the presence of a sodium gradient across the membrane. This is ATP synthase epsilon chain, sodium ion specific (atpC) from Acetobacterium woodii (strain ATCC 29683 / DSM 1030 / JCM 2381 / KCTC 1655 / WB1).